We begin with the raw amino-acid sequence, 236 residues long: Protein-S-isoprenylcysteine O-methyltransferase (236 aa).

The next 4 helical transmembrane spans lie at 3-23 (NLHTSIAVASICLTSAFLGCV), 24-44 (FGLGFFVWIIYGYSIGGFFAF), 76-96 (AYWLAMLVGLLECLLSGGKSF), and 108-128 (FLINFIFSVYQTSALGFLCLG). S-adenosyl-L-methionine is bound by residues 155–158 (HLLV), Tyr-163, and 168–171 (HPSY). The chain crosses the membrane as a helical span at residues 174–194 (FFIWALGTQMLLGNFVSTLLF). Arg-205 lines the substrate pocket. Residue Glu-209 participates in S-adenosyl-L-methionine binding.

It belongs to the class VI-like SAM-binding methyltransferase superfamily. Isoprenylcysteine carboxyl methyltransferase family.

The protein resides in the membrane. The catalysed reaction is [protein]-C-terminal S-[(2E,6E)-farnesyl]-L-cysteine + S-adenosyl-L-methionine = [protein]-C-terminal S-[(2E,6E)-farnesyl]-L-cysteine methyl ester + S-adenosyl-L-homocysteine. Functionally, mediates C-terminal methylation of the isoprenylated C-terminal cysteine in M-factor. This Schizosaccharomyces pombe (strain 972 / ATCC 24843) (Fission yeast) protein is Protein-S-isoprenylcysteine O-methyltransferase (mam4).